A 782-amino-acid polypeptide reads, in one-letter code: MGSDWDEIKRLAADFQKAQLTSTLQKLSERNCVEIVTLLLEKQMLEVVFTNDGKEYITPDHLEREIQDELYVNGGRANLVEVSKTLNVDLSRIEVLAERIAAENPSVHLVLGQLIDEDYISHIAQEINEKLVQRGEISISELASQFDLPSDFLQHDVVEKHLGKIIKGRQDASNPRVFFTQAYIQRCKAKIRGALAAITRPINVAVILQQIGVQEKIFHSLLDEIAPAGQVTSKQANSQYVPHIYAKTQADWVNSFYKQNSFLEYDAIQKLGISDAKSYIRKQFPNEEFLFLKRVALGARLVELTVVTALNECSATKQYLDLTTILPSNLSEEDIEEVFSTIMAQKHSNPSNFVYLDGIVFSQPYLAQLVQPCKALAESQAKAAIDGGVYQQYIVEKTLAQKGNVSTQELEDDGKVDKRDERRKKASSGKAGGGAQGRETKTKSTKKHQRGKAAAQFDSDDEDDVQQGTRGGGGASKKAVKPLELVKTADIVKLITASLEEEGLEHLSKPIAALYTNQFNQTALARAQELFEATPQTNRRQTHAAIQDRINTLLIDIRLYEKGLKLFPQDTQTQLVKYLLKSLGNEICNELSLYVASECNLTVKNTNLNVDQRNKLAQECEAQYRAALLEQNKALNKSIDEFELATETVLKSCSMIIKKVDKKKDRLLIADHKRKLQKQLLECHEPALLLHLAALILFTTITGSILHASGKFVSAILQHIRGSLNEEQNALLLRYHDLVLQVLQATPDSNESKLANEHLQAMQTQVVELAQNFSRASVSKAD.

The interval 405-478 (VSTQELEDDG…TRGGGGASKK (74 aa)) is disordered.

It belongs to the UFL1 family.

In terms of biological role, E3 UFM1-protein ligase that mediates ufmylation of target proteins. The protein is E3 UFM1-protein ligase 1 homolog of Drosophila sechellia (Fruit fly).